The chain runs to 284 residues: Probable plastid-lipid-associated protein 10, chloroplastic (284 aa).

A chloroplast-targeting transit peptide spans 1–40; that stretch reads MDRIASATFSCPAISLSRVCRISPFGLNIKTNHRKRFSCR.

It belongs to the PAP/fibrillin family.

It localises to the plastid. The protein resides in the chloroplast. It is found in the plastoglobule. This Arabidopsis thaliana (Mouse-ear cress) protein is Probable plastid-lipid-associated protein 10, chloroplastic (PAP10).